We begin with the raw amino-acid sequence, 92 residues long: Phosphoribosyl-ATP pyrophosphatase (92 aa).

This sequence belongs to the PRA-PH family.

It is found in the cytoplasm. The enzyme catalyses 1-(5-phospho-beta-D-ribosyl)-ATP + H2O = 1-(5-phospho-beta-D-ribosyl)-5'-AMP + diphosphate + H(+). It functions in the pathway amino-acid biosynthesis; L-histidine biosynthesis; L-histidine from 5-phospho-alpha-D-ribose 1-diphosphate: step 2/9. The sequence is that of Phosphoribosyl-ATP pyrophosphatase from Leptospira biflexa serovar Patoc (strain Patoc 1 / ATCC 23582 / Paris).